A 396-amino-acid polypeptide reads, in one-letter code: MAEAWFETVAIAQQRAKRRLPKSVYSSLIAASEKGITVADNVAAFSELGFAPHVIGATDKRDLSTTVMGQEVSLPVIISPTGVQAVDPGGEVAVARAAAARGTVMGLSSFASKPIEEVIAANPKTFFQVYWQGGRDALAERVERARQAGAVGLVVTTDWTFSHGRDWGSPKIPEEMNLKTILRLSPEAITRPRWLWKFAKTLRPPDLRVPNQGRRGEPGPPFFAAYGEWMATPPPTWEDIGWLRELWGGPFMLKGVMRVDDAKRAVDAGVSAISVSNHGGNNLDGTPASIRALPAVSAAVGDQVEVLLDGGIRRGSDVVKAVALGARAVMIGRAYLWGLAANGQAGVENVLDILRGGIDSALMGLGHASVHDLSPADILVPTGFIRDLGVPSRRDV.

Residues 1–383 (MAEAWFETVA…SPADILVPTG (383 aa)) form the FMN hydroxy acid dehydrogenase domain. Ser-108, Gln-128, Thr-156, and Lys-254 together coordinate FMN. His-278 serves as the catalytic Proton acceptor. FMN is bound by residues 309-313 (DGGIR) and 332-333 (GR).

It belongs to the FMN-dependent alpha-hydroxy acid dehydrogenase family. FMN is required as a cofactor.

The enzyme catalyses 3-amino-5-[(4-hydroxyphenyl)methyl]-4,4-dimethyl-2-pyrrolidin-2-one + O2 + H2O = pre-mycofactocin + H2O2 + NH4(+). Involved in the biosynthesis of the enzyme cofactor mycofactocin (MFT). Catalyzes the oxidative deamination of AHDP (3-amino-5-[(4-hydroxyphenyl)methyl]-4,4-dimethyl-2-pyrrolidin-2-one), forming an alpha-keto amide moiety on the resulting molecule, which is called pre-mycofactocin (PMFT). This reaction occurs via a 5-[(4-hydroxyphenyl)methyl]-3-imino-4,4-dimethylpyrrolidin-2-one intermediate, which converts to PMFT. The alpha-keto amide moiety is the redox-active center for the redox activity of mycofactocin. This Mycobacterium tuberculosis (strain CDC 1551 / Oshkosh) protein is Pre-mycofactocin synthase (mftD).